We begin with the raw amino-acid sequence, 56 residues long: Large ribosomal subunit protein bL33 (56 aa).

It belongs to the bacterial ribosomal protein bL33 family.

In Actinobacillus pleuropneumoniae serotype 5b (strain L20), this protein is Large ribosomal subunit protein bL33.